Consider the following 55-residue polypeptide: Hirustasin (55 aa).

5 disulfides stabilise this stretch: C6–C17, C11–C22, C24–C44, C29–C48, and C33–C50. One can recognise an Antistasin-like domain in the interval 24-50 (CNEVHCRIRCKYGLKKDENGCEYPCSC).

The protein belongs to the protease inhibitor I15 (antistasin) family.

The protein resides in the secreted. Its function is as follows. Acts as an inhibitor of tissue kallikrein, trypsin, chymotrypsin and neutrophil cathepsin G. This is Hirustasin from Hirudo medicinalis (Medicinal leech).